The chain runs to 304 residues: MTTRQVEHEYTIGAPAATVYRLLADVSHWPQIFPPTIHVERQATGAHQERIHIWATANGQAKNWTSRRTLDPEALRIDSASEVTTAPVAAMGGTWIVEPLGADSSRIRLLHDSGPSPRPQDLQWIDRAVDTTRHLELAALATTSNHAHAAEERELLSFTDTCTIDGAAKDVFDFVNEADRWPERLPHVATVRFEEPAPGLQILEMDTRAKDGSVHTTKSYRVALDTRKIAYKQVTLPALMTLHTGVWTFTRRPGHHRGELAAHRLHQHANIAKIPRRAGQVADARDYVHSALSTNSRAPWASQG.

It functions in the pathway antifungal biosynthesis; monensin biosynthesis. In terms of biological role, is needed for correct cyclization of the oligoketide leading to isochromanequinone formation. This chain is Granaticin polyketide synthase bifunctional cyclase/dehydratase, found in Streptomyces virginiae (Streptomyces cinnamonensis).